The chain runs to 119 residues: Phospholipase A2 A2-actitoxin-Cgg2a (119 aa).

Disulfide bonds link Cys-25–Cys-119, Cys-27–Cys-43, Cys-42–Cys-101, Cys-49–Cys-94, Cys-61–Cys-87, and Cys-78–Cys-92. Residues Gly-28 and Gly-30 each coordinate Ca(2+). His-46 is an active-site residue. Ca(2+) is bound at residue Asp-47. The active site involves Asp-95.

It belongs to the phospholipase A2 family. Homodimer. It depends on Ca(2+) as a cofactor.

It localises to the secreted. It is found in the nematocyst. The catalysed reaction is a 1,2-diacyl-sn-glycero-3-phosphocholine + H2O = a 1-acyl-sn-glycero-3-phosphocholine + a fatty acid + H(+). In terms of biological role, sea anemone phospholipase A2 (PLA2). When incubated with plasma, this protein shows a moderate anticoagulant activity (0.15 ug of enzyme/200 uL of plasma), inhibiting clotting induced by thrombin. This enzyme also induces myotoxicity, and edema. PLA2 catalyzes the calcium-dependent hydrolysis of the 2-acyl groups in 3-sn-phosphoglycerides. The sequence is that of Phospholipase A2 A2-actitoxin-Cgg2a from Condylactis gigantea (Giant Caribbean anemone).